The primary structure comprises 125 residues: Snaclec VP12 subunit B (125 aa).

3 cysteine pairs are disulfide-bonded: Cys4/Cys15, Cys32/Cys121, and Cys98/Cys113. The C-type lectin domain occupies 11 to 122 (FEKYCYKVFQ…CNDPRYFVCK (112 aa)).

This sequence belongs to the snaclec family. As to quaternary structure, heterodimer of subunits alpha and beta; disulfide-linked. As to expression, expressed by the venom gland.

The protein localises to the secreted. Its function is as follows. Inhibits integrin alpha-2/beta-1- (ITGA2/ITGB1) dependent melanoma metastasis. In Daboia palaestinae (Palestine viper), this protein is Snaclec VP12 subunit B.